Here is a 180-residue protein sequence, read N- to C-terminus: Bifunctional bis(5'-adenosyl)-triphosphatase/adenylylsulfatase FHIT (180 aa).

In terms of domain architecture, HIT spans 27–134; sequence SYAFGPYKID…LPRKGGDFEK (108 aa). Positions 52 and 108 each coordinate substrate. Positions 119–123 match the Histidine triad motif motif; the sequence is HVHIH. His121 functions as the Tele-AMP-histidine intermediate in the catalytic mechanism. Residue His123 coordinates substrate.

The enzyme catalyses P(1),P(3)-bis(5'-adenosyl) triphosphate + H2O = AMP + ADP + 2 H(+). The catalysed reaction is adenosine 5'-phosphosulfate + H2O = sulfate + AMP + 2 H(+). It carries out the reaction adenosine 5'-phosphosulfate + NH4(+) = adenosine 5'-phosphoramidate + sulfate + 2 H(+). It catalyses the reaction adenosine 5'-phosphoramidate + H2O = AMP + NH4(+). Functionally, possesses dinucleoside triphosphate hydrolase activity. Cleaves P(1)-P(3)-bis(5'-adenosyl) triphosphate (Ap3A) to yield AMP and ADP. Exhibits adenylylsulfatase activity, hydrolyzing adenosine 5'-phosphosulfate to yield AMP and sulfate. Exhibits adenosine 5'-monophosphoramidase activity, hydrolyzing purine nucleotide phosphoramidates with a single phosphate group such as adenosine 5'monophosphoramidate (AMP-NH2) to yield AMP and NH2. Exhibits adenylylsulfate-ammonia adenylyltransferase, catalyzing the ammonolysis of adenosine 5'-phosphosulfate resulting in the formation of adenosine 5'-phosphoramidate. The polypeptide is Bifunctional bis(5'-adenosyl)-triphosphatase/adenylylsulfatase FHIT (Arabidopsis thaliana (Mouse-ear cress)).